The primary structure comprises 75 residues: Beta-defensin 30 (75 aa).

Residues 1-22 (MGSLQLILVLFVLLSDVPPVRS) form the signal peptide. Intrachain disulfides connect Cys35/Cys62, Cys42/Cys56, and Cys46/Cys63.

The protein belongs to the beta-defensin family.

The protein localises to the secreted. In terms of biological role, has antibacterial activity. The chain is Beta-defensin 30 (Defb30) from Rattus norvegicus (Rat).